Here is a 77-residue protein sequence, read N- to C-terminus: Protein OPG128 (77 aa).

The protein belongs to the orthopoxvirus OPG128 family. In terms of assembly, interacts with sulfhydryl oxidase OPG072; this interaction involves formation of a transient disulfide-bonded intermediate, allowing disulfide bond transfer. Interacts with OPG088; this interaction involves formation of a transient disulfide-bonded intermediate, allowing disulfide bond transfer.

In terms of biological role, late protein which probably participates in disulfide bond formation by functioning as a thiol-disulfide transfer protein between membrane-associated OPG072 and OPG08. The complete pathway for formation of disulfide bonds in intracellular virion membrane proteins sequentially involves oxidation of OPG072, OPG128 and OPG08. This chain is Protein OPG128 (OPG128), found in Monkeypox virus.